Here is a 358-residue protein sequence, read N- to C-terminus: Uroporphyrinogen decarboxylase (358 aa).

Substrate-binding positions include 27–31 (RQAGR), aspartate 77, tyrosine 154, serine 209, and histidine 330.

Belongs to the uroporphyrinogen decarboxylase family. In terms of assembly, homodimer.

It is found in the cytoplasm. The catalysed reaction is uroporphyrinogen III + 4 H(+) = coproporphyrinogen III + 4 CO2. The protein operates within porphyrin-containing compound metabolism; protoporphyrin-IX biosynthesis; coproporphyrinogen-III from 5-aminolevulinate: step 4/4. Its function is as follows. Catalyzes the decarboxylation of four acetate groups of uroporphyrinogen-III to yield coproporphyrinogen-III. The polypeptide is Uroporphyrinogen decarboxylase (Acinetobacter baylyi (strain ATCC 33305 / BD413 / ADP1)).